A 411-amino-acid chain; its full sequence is LL-diaminopimelate aminotransferase (411 aa).

Tyrosine 15 and glycine 42 together coordinate substrate. Pyridoxal 5'-phosphate is bound by residues tyrosine 72, 108-109 (SK), tyrosine 132, asparagine 187, tyrosine 218, and 246-248 (SFS). Substrate contacts are provided by lysine 109, tyrosine 132, and asparagine 187. Lysine 249 carries the post-translational modification N6-(pyridoxal phosphate)lysine. 2 residues coordinate pyridoxal 5'-phosphate: arginine 257 and asparagine 292. Asparagine 292 and arginine 388 together coordinate substrate.

This sequence belongs to the class-I pyridoxal-phosphate-dependent aminotransferase family. LL-diaminopimelate aminotransferase subfamily. Homodimer. Requires pyridoxal 5'-phosphate as cofactor.

It carries out the reaction (2S,6S)-2,6-diaminopimelate + 2-oxoglutarate = (S)-2,3,4,5-tetrahydrodipicolinate + L-glutamate + H2O + H(+). The protein operates within amino-acid biosynthesis; L-lysine biosynthesis via DAP pathway; LL-2,6-diaminopimelate from (S)-tetrahydrodipicolinate (aminotransferase route): step 1/1. Its function is as follows. Involved in the synthesis of meso-diaminopimelate (m-DAP or DL-DAP), required for both lysine and peptidoglycan biosynthesis. Catalyzes the direct conversion of tetrahydrodipicolinate to LL-diaminopimelate. This chain is LL-diaminopimelate aminotransferase, found in Citrifermentans bemidjiense (strain ATCC BAA-1014 / DSM 16622 / JCM 12645 / Bem) (Geobacter bemidjiensis).